Reading from the N-terminus, the 299-residue chain is MKVVKEFSVCGGRLIKLSHNSNSTKTSMNVNIYLPKHYYAQDFPRNKRIPTVFYLSGLTCTPDNASEKAFWQFQADKYGFAIVFPDTSPRGDEVANDPEGSWDFGQGAGFYLNATQEPYAQHYQMYDYIHKELPQTLDSHFNKNGDVKLDFLDNVAITGHSMGGYGAICGYLKGYSGKRYKSCSAFAPIVNPSNVPWGQKAFKGYLGEEKAQWEAYDPCLLIKNIRHVGDDRILIHVGDSDPFLEEHLKPELLLEAVKATSWQDYVEIKKVHGFDHSYYFVSTFVPEHAEFHARNLGLI.

Residues Met1 and His140 each contribute to the Cu cation site. Catalysis depends on charge relay system residues Ser161, Asp241, and His276.

Belongs to the esterase D family. As to quaternary structure, monomer.

The protein localises to the cytoplasm. The catalysed reaction is S-formylglutathione + H2O = formate + glutathione + H(+). Functionally, serine hydrolase involved in the detoxification of formaldehyde. This is S-formylglutathione hydrolase from Saccharomyces cerevisiae (strain ATCC 204508 / S288c) (Baker's yeast).